Reading from the N-terminus, the 65-residue chain is Mating-type pheromone BBP1(2) (65 aa).

The residue at position 62 (Cys-62) is a Cysteine methyl ester. Residue Cys-62 is the site of S-farnesyl cysteine attachment. The propeptide at 63–65 (VVA) is removed in mature form.

Its subcellular location is the cell membrane. Activates B-regulated development. This chain is Mating-type pheromone BBP1(2) (BBP1(2)), found in Schizophyllum commune (Split gill fungus).